A 594-amino-acid chain; its full sequence is Elongation factor 4 (594 aa).

In terms of domain architecture, tr-type G spans 2-184 (KNIRNFSIIA…TIVAKVPAPE (183 aa)). Residues 14–19 (DHGKST) and 131–134 (NKID) contribute to the GTP site.

Belongs to the TRAFAC class translation factor GTPase superfamily. Classic translation factor GTPase family. LepA subfamily.

It localises to the cell inner membrane. The catalysed reaction is GTP + H2O = GDP + phosphate + H(+). Functionally, required for accurate and efficient protein synthesis under certain stress conditions. May act as a fidelity factor of the translation reaction, by catalyzing a one-codon backward translocation of tRNAs on improperly translocated ribosomes. Back-translocation proceeds from a post-translocation (POST) complex to a pre-translocation (PRE) complex, thus giving elongation factor G a second chance to translocate the tRNAs correctly. Binds to ribosomes in a GTP-dependent manner. This chain is Elongation factor 4, found in Francisella tularensis subsp. holarctica (strain FTNF002-00 / FTA).